The chain runs to 71 residues: DNA-directed RNA polymerase subunit Rpo10 (71 aa).

Residues Cys-6, Cys-9, Cys-52, and Cys-53 each contribute to the Zn(2+) site.

This sequence belongs to the archaeal Rpo10/eukaryotic RPB10 RNA polymerase subunit family. In terms of assembly, part of the RNA polymerase complex. Zn(2+) serves as cofactor.

The protein resides in the cytoplasm. It carries out the reaction RNA(n) + a ribonucleoside 5'-triphosphate = RNA(n+1) + diphosphate. In terms of biological role, DNA-dependent RNA polymerase (RNAP) catalyzes the transcription of DNA into RNA using the four ribonucleoside triphosphates as substrates. This is DNA-directed RNA polymerase subunit Rpo10 from Methanocella arvoryzae (strain DSM 22066 / NBRC 105507 / MRE50).